Here is a 388-residue protein sequence, read N- to C-terminus: S-adenosylmethionine synthase (388 aa).

An ATP-binding site is contributed by His-17. A Mg(2+)-binding site is contributed by Asp-19. Residue Glu-45 participates in K(+) binding. Glu-58 and Gln-106 together coordinate L-methionine. The segment at 106–116 (QSAHIAQGVDK) is flexible loop. ATP is bound by residues 166–168 (DAK), Asp-241, 247–248 (RK), Ala-264, and Lys-268. Asp-241 is a binding site for L-methionine. Lys-272 is a binding site for L-methionine.

Belongs to the AdoMet synthase family. As to quaternary structure, homotetramer; dimer of dimers. The cofactor is Mg(2+). K(+) serves as cofactor.

The protein localises to the cytoplasm. It catalyses the reaction L-methionine + ATP + H2O = S-adenosyl-L-methionine + phosphate + diphosphate. It participates in amino-acid biosynthesis; S-adenosyl-L-methionine biosynthesis; S-adenosyl-L-methionine from L-methionine: step 1/1. In terms of biological role, catalyzes the formation of S-adenosylmethionine (AdoMet) from methionine and ATP. The overall synthetic reaction is composed of two sequential steps, AdoMet formation and the subsequent tripolyphosphate hydrolysis which occurs prior to release of AdoMet from the enzyme. This chain is S-adenosylmethionine synthase, found in Cereibacter sphaeroides (strain ATCC 17023 / DSM 158 / JCM 6121 / CCUG 31486 / LMG 2827 / NBRC 12203 / NCIMB 8253 / ATH 2.4.1.) (Rhodobacter sphaeroides).